Reading from the N-terminus, the 206-residue chain is Probable glutathione S-transferase 9 (206 aa).

The region spanning 2–79 is the GST N-terminal domain; the sequence is VSYKLIYFQS…YLSKQFGISG (78 aa). Residues Tyr-8, Trp-39, Lys-43, 49-51, and 63-64 each bind glutathione; these read GQV and QS. The GST C-terminal domain maps to 81-206; that stretch reads SSWEEAQVDA…WIEKRPVTSR (126 aa).

This sequence belongs to the GST superfamily. Sigma family.

The catalysed reaction is RX + glutathione = an S-substituted glutathione + a halide anion + H(+). In terms of biological role, conjugation of reduced glutathione to a wide number of exogenous and endogenous hydrophobic electrophiles. The chain is Probable glutathione S-transferase 9 (gst-9) from Caenorhabditis elegans.